Here is a 336-residue protein sequence, read N- to C-terminus: MTYAIHESLTLLSQKQDLPEELTFTVVQDLLSGELTPAQIGGLLLGLSLKGETPEEIAAFAQALRGAGLKIKAPAGTLDTCGTGGDRSGTFNISTTAAFVIAGAGVPVAKHGNRFASGRCGSADVLEQLGISLKATPESSERHLQHIGMTFLFAQVYHPAMAKVAAERRELGIRTIFNLLGPLLNPAGAPYQLLGVSSPSLLPKMAKALQILGSKRAVVAVGEDGLDEVTLTGATQAILIDGGEIQPFIIRPEEYGLNLCSLQDLQGGTPAENGQITLRILQGKKGPQRDIVLLNAGTALYAANKAAGIREGIALAAESLDSGKALSILEKLKASA.

5-phospho-alpha-D-ribose 1-diphosphate-binding positions include glycine 82, 85–86 (GD), threonine 90, 92–95 (NIST), 110–118 (KHGNRFASG), and serine 122. Glycine 82 is a binding site for anthranilate. Mg(2+) is bound at residue serine 94. Asparagine 113 serves as a coordination point for anthranilate. Arginine 168 serves as a coordination point for anthranilate. Aspartate 227 and glutamate 228 together coordinate Mg(2+).

It belongs to the anthranilate phosphoribosyltransferase family. In terms of assembly, homodimer. It depends on Mg(2+) as a cofactor.

The catalysed reaction is N-(5-phospho-beta-D-ribosyl)anthranilate + diphosphate = 5-phospho-alpha-D-ribose 1-diphosphate + anthranilate. It functions in the pathway amino-acid biosynthesis; L-tryptophan biosynthesis; L-tryptophan from chorismate: step 2/5. Catalyzes the transfer of the phosphoribosyl group of 5-phosphorylribose-1-pyrophosphate (PRPP) to anthranilate to yield N-(5'-phosphoribosyl)-anthranilate (PRA). The chain is Anthranilate phosphoribosyltransferase from Desulfitobacterium hafniense (strain Y51).